A 447-amino-acid chain; its full sequence is Phospholipase A(1) LCAT3 (447 aa).

Ser-177 functions as the Acyl-ester intermediate in the catalytic mechanism. Active-site charge relay system residues include Asp-384 and His-409.

Belongs to the AB hydrolase superfamily. Lipase family.

The protein localises to the microsome membrane. The catalysed reaction is a 1,2-diacyl-sn-glycero-3-phosphocholine + H2O = a 2-acyl-sn-glycero-3-phosphocholine + a fatty acid + H(+). Hydrolyzes the sn-1 acylester bond of phospholipids. Phosphatidylcholine, phosphatidylethanolamine and phosphatidic acid can be used as substrates. Weak activity with lysophosphatidylcholine and no activity with tripalmitoylglycerol and cholesteryl oleate. Seems to have a preference for unsaturated fatty acids at the sn-1 position. The sequence is that of Phospholipase A(1) LCAT3 (LCAT3) from Arabidopsis thaliana (Mouse-ear cress).